The primary structure comprises 402 residues: 4-hydroxy-3-methylbut-2-enyl diphosphate reductase (402 aa).

[4Fe-4S] cluster is bound at residue Cys-66. His-96 lines the (2E)-4-hydroxy-3-methylbut-2-enyl diphosphate pocket. Residue His-96 coordinates dimethylallyl diphosphate. His-96 serves as a coordination point for isopentenyl diphosphate. Cys-157 lines the [4Fe-4S] cluster pocket. Residue His-185 participates in (2E)-4-hydroxy-3-methylbut-2-enyl diphosphate binding. Position 185 (His-185) interacts with dimethylallyl diphosphate. His-185 is a binding site for isopentenyl diphosphate. The Proton donor role is filled by Glu-187. Residue Thr-250 participates in (2E)-4-hydroxy-3-methylbut-2-enyl diphosphate binding. Residue Cys-288 coordinates [4Fe-4S] cluster. Positions 317, 318, 319, and 379 each coordinate (2E)-4-hydroxy-3-methylbut-2-enyl diphosphate. The dimethylallyl diphosphate site is built by Ser-317, Ser-318, Asn-319, and Ser-379. Isopentenyl diphosphate contacts are provided by Ser-317, Ser-318, Asn-319, and Ser-379.

It belongs to the IspH family. Requires [4Fe-4S] cluster as cofactor.

The catalysed reaction is isopentenyl diphosphate + 2 oxidized [2Fe-2S]-[ferredoxin] + H2O = (2E)-4-hydroxy-3-methylbut-2-enyl diphosphate + 2 reduced [2Fe-2S]-[ferredoxin] + 2 H(+). It catalyses the reaction dimethylallyl diphosphate + 2 oxidized [2Fe-2S]-[ferredoxin] + H2O = (2E)-4-hydroxy-3-methylbut-2-enyl diphosphate + 2 reduced [2Fe-2S]-[ferredoxin] + 2 H(+). Its pathway is isoprenoid biosynthesis; dimethylallyl diphosphate biosynthesis; dimethylallyl diphosphate from (2E)-4-hydroxy-3-methylbutenyl diphosphate: step 1/1. The protein operates within isoprenoid biosynthesis; isopentenyl diphosphate biosynthesis via DXP pathway; isopentenyl diphosphate from 1-deoxy-D-xylulose 5-phosphate: step 6/6. Its function is as follows. Catalyzes the conversion of 1-hydroxy-2-methyl-2-(E)-butenyl 4-diphosphate (HMBPP) into a mixture of isopentenyl diphosphate (IPP) and dimethylallyl diphosphate (DMAPP). Acts in the terminal step of the DOXP/MEP pathway for isoprenoid precursor biosynthesis. The polypeptide is 4-hydroxy-3-methylbut-2-enyl diphosphate reductase (Nostoc sp. (strain PCC 7120 / SAG 25.82 / UTEX 2576)).